The following is a 550-amino-acid chain: Chaperonin GroEL (550 aa).

Residues 30 to 33, lysine 51, 87 to 91, glycine 415, 479 to 481, and aspartate 495 contribute to the ATP site; these read TLGP, DGTTT, and NAA.

It belongs to the chaperonin (HSP60) family. Forms a cylinder of 14 subunits composed of two heptameric rings stacked back-to-back. Interacts with the co-chaperonin GroES.

It is found in the cytoplasm. It catalyses the reaction ATP + H2O + a folded polypeptide = ADP + phosphate + an unfolded polypeptide.. Functionally, together with its co-chaperonin GroES, plays an essential role in assisting protein folding. The GroEL-GroES system forms a nano-cage that allows encapsulation of the non-native substrate proteins and provides a physical environment optimized to promote and accelerate protein folding. In Aromatoleum aromaticum (strain DSM 19018 / LMG 30748 / EbN1) (Azoarcus sp. (strain EbN1)), this protein is Chaperonin GroEL.